The chain runs to 685 residues: Probable transcriptional regulator SLK3 (685 aa).

2 disordered regions span residues Asn25 to Tyr66 and Leu108 to Leu129. The segment covering Gln39 to Gln56 has biased composition (low complexity). The tract at residues Pro176–Leu423 is dimerization. The Nuclear localization signal signature appears at Arg185–Arg199. The span at Gly447–Gln459 shows a compositional bias: polar residues. 3 disordered regions span residues Gly447–Ser491, Asn512–Glu591, and Gln611–Pro658. The segment covering Met460 to Thr471 has biased composition (low complexity). Positions Asn512–Phe524 are enriched in polar residues. The span at Ser525 to Gln543 shows a compositional bias: low complexity. Polar residues-rich tracts occupy residues Arg544 to Asn588, Gln611 to Ile636, and Arg645 to Pro658.

Belongs to the adn1/SEU family.

It localises to the nucleus. In terms of biological role, probable transcription regulator that functions in the development of the carpel margin meristem similarly to SEUSS (SEU). In association with SEU, supports organ development from meristematic regions by facilitating auxin response and thus organ initiation, and by sustaining meristematic potential through the maintenance of PHABULOSA expression. The polypeptide is Probable transcriptional regulator SLK3 (SLK3) (Arabidopsis thaliana (Mouse-ear cress)).